Reading from the N-terminus, the 143-residue chain is ATP synthase subunit b' (143 aa).

The chain crosses the membrane as a helical span at residues 6–26; the sequence is ATLPLMALQFVVLAFLLNAIF.

Belongs to the ATPase B chain family. F-type ATPases have 2 components, F(1) - the catalytic core - and F(0) - the membrane proton channel. F(1) has five subunits: alpha(3), beta(3), gamma(1), delta(1), epsilon(1). F(0) has four main subunits: a(1), b(1), b'(1) and c(10-14). The alpha and beta chains form an alternating ring which encloses part of the gamma chain. F(1) is attached to F(0) by a central stalk formed by the gamma and epsilon chains, while a peripheral stalk is formed by the delta, b and b' chains.

Its subcellular location is the cellular thylakoid membrane. Functionally, f(1)F(0) ATP synthase produces ATP from ADP in the presence of a proton or sodium gradient. F-type ATPases consist of two structural domains, F(1) containing the extramembraneous catalytic core and F(0) containing the membrane proton channel, linked together by a central stalk and a peripheral stalk. During catalysis, ATP synthesis in the catalytic domain of F(1) is coupled via a rotary mechanism of the central stalk subunits to proton translocation. In terms of biological role, component of the F(0) channel, it forms part of the peripheral stalk, linking F(1) to F(0). The b'-subunit is a diverged and duplicated form of b found in plants and photosynthetic bacteria. This Synechocystis sp. (strain ATCC 27184 / PCC 6803 / Kazusa) protein is ATP synthase subunit b'.